A 317-amino-acid polypeptide reads, in one-letter code: Zinc transporter ZIP3 (317 aa).

At 1-3 (MSQ) the chain is on the extracellular side. The helical transmembrane segment at 4 to 24 (LLVAKVLCMVGVFFFMLLGSL) threads the bilayer. Residues 25–42 (LPVKVIEADFEKAHRSKK) lie on the Cytoplasmic side of the membrane. A helical transmembrane segment spans residues 43–63 (VLSLCNTFGGGVFLATCFNAL). Residues 64-85 (LPAVRDKLQQVLSLGHISTDYP) lie on the Extracellular side of the membrane. Residues 86 to 106 (LAETLMMVGFFLTVFVEQLVL) traverse the membrane as a helical segment. The Cytoplasmic portion of the chain corresponds to 107 to 172 (TFRRERPPFI…RELGRPGPLR (66 aa)). Residues Ser-125 and Ser-129 each carry the phosphoserine modification. A helical transmembrane segment spans residues 173-193 (LLSLVFALSAHSVFEGLALGL). Residues 194–199 (QEEGER) lie on the Extracellular side of the membrane. The helical transmembrane segment at 200–220 (VVSLFVGVAVHETLVAVALGI) threads the bilayer. The Cytoplasmic portion of the chain corresponds to 221-232 (SMARSAVPLRDA). A helical membrane pass occupies residues 233-253 (AKLAVTVSAMIPVGIGLGLGI). At 254–265 (ESARSVASSVAS) the chain is on the extracellular side. The helical transmembrane segment at 266–286 (ALLQGLAGGTFLFVTFLEILA) threads the bilayer. Topologically, residues 287 to 294 (KELEERSE) are cytoplasmic. The helical transmembrane segment at 295-315 (QLLKVLFLVLGYAVLAGMVFL) threads the bilayer. Residues 316-317 (KW) are Extracellular-facing.

It belongs to the ZIP transporter (TC 2.A.5) family.

It localises to the cell membrane. The protein resides in the apical cell membrane. The enzyme catalyses Zn(2+)(in) = Zn(2+)(out). Functionally, transporter for the divalent cation Zn(2+). Mediates the influx of Zn(2+) into cells from extracellular space. Controls Zn(2+) accumulation into dentate gyrus granule cells in the hippocampus. Mediates Zn(2+) reuptake from the secreted milk within the alveolar lumen. The sequence is that of Zinc transporter ZIP3 (Slc39a3) from Rattus norvegicus (Rat).